Reading from the N-terminus, the 627-residue chain is 1-deoxy-D-xylulose-5-phosphate synthase (627 aa).

Thiamine diphosphate is bound by residues His-80 and 121–123 (GHS). A Mg(2+)-binding site is contributed by Asp-152. Thiamine diphosphate-binding positions include 153–154 (GA), Asn-181, Tyr-288, and Glu-370. Residue Asn-181 participates in Mg(2+) binding.

It belongs to the transketolase family. DXPS subfamily. Homodimer. The cofactor is Mg(2+). Thiamine diphosphate is required as a cofactor.

It carries out the reaction D-glyceraldehyde 3-phosphate + pyruvate + H(+) = 1-deoxy-D-xylulose 5-phosphate + CO2. It participates in metabolic intermediate biosynthesis; 1-deoxy-D-xylulose 5-phosphate biosynthesis; 1-deoxy-D-xylulose 5-phosphate from D-glyceraldehyde 3-phosphate and pyruvate: step 1/1. Functionally, catalyzes the acyloin condensation reaction between C atoms 2 and 3 of pyruvate and glyceraldehyde 3-phosphate to yield 1-deoxy-D-xylulose-5-phosphate (DXP). The sequence is that of 1-deoxy-D-xylulose-5-phosphate synthase from Vibrio atlanticus (strain LGP32) (Vibrio splendidus (strain Mel32)).